The sequence spans 227 residues: Thymidine kinase 1 (227 aa).

ATP-binding positions include 15–22, 47–49, and 91–94; these read GPMFSGKT, DTR, and DEGQ. Residue glutamate 92 is the Proton acceptor of the active site. Residue phenylalanine 122 participates in substrate binding. Positions 147 and 150 each coordinate Zn(2+). Substrate-binding positions include 166-170 and tyrosine 175; that span reads IELIG. Zn(2+) is bound by residues cysteine 179 and cysteine 182. Residues 187–196 show a composition bias toward polar residues; the sequence is QNEGNSTKPS. The disordered stretch occupies residues 187 to 227; sequence QNEGNSTKPSKTARHSHSQSAPSVAPLAVNINPDDHLNNDY.

It belongs to the thymidine kinase family. In terms of assembly, interacts with calmodulin in the presence of Ca(2+).

The enzyme catalyses thymidine + ATP = dTMP + ADP + H(+). This chain is Thymidine kinase 1, found in Dictyostelium discoideum (Social amoeba).